We begin with the raw amino-acid sequence, 146 residues long: Meiotically up-regulated gene 151 protein (146 aa).

Positions 1 to 40 (MSLVAYDSEEEEQTSLVNENNDIKGRSEEPHWKIPNSPKA) are disordered. The span at 21–32 (NDIKGRSEEPHW) shows a compositional bias: basic and acidic residues.

It is found in the nucleus. Functionally, has a role in meiosis. This is Meiotically up-regulated gene 151 protein (mug151) from Schizosaccharomyces pombe (strain 972 / ATCC 24843) (Fission yeast).